The following is a 979-amino-acid chain: Collagen alpha-2(I) chain (979 aa).

The tract at residues 1–979 is disordered; sequence SGGFDFSFLP…FGYEGDFYRA (979 aa). 4-hydroxyproline occurs at positions 10, 13, 38, and 44. Residues 24–70 are compositionally biased toward low complexity; that stretch reads LGPGPMGLMGPRGPPGASGAPGPQGFQGPAGEPGEPGQTGPAGARGP. Lys99 is modified (5-hydroxylysine; alternate). Lys99 is a glycosylation site (O-linked (Gal...) hydroxylysine; alternate). 4 stretches are compositionally biased toward low complexity: residues 147–176, 222–263, 272–282, and 312–331; these read VGAP…SAGP, PGAN…AGSK, SAGPQGPPGSS, and RAGV…AGVR. 4-hydroxyproline occurs at positions 334 and 337. Residues 363 to 382 are compositionally biased toward low complexity; it reads LPGIDGRPGPIGPAGARGEA. A compositionally biased stretch (gly residues) spans 427–436; that stretch reads GVQGGKGEQG. Residues 483–500 are compositionally biased toward low complexity; that stretch reads PGESGAVGPSGAIGSRGP. Residues 517–527 show a composition bias toward gly residues; it reads GAPGGSGGLPG. Composition is skewed to low complexity over residues 550–594 and 601–621; these read VGTT…PRGS and VGPA…QPGA. Residues 622–631 show a composition bias toward basic and acidic residues; it reads KGERGTKGPK. The span at 639–649 shows a compositional bias: low complexity; the sequence is PTGPVGSAGPA. Positions 659-668 are enriched in gly residues; sequence GSRGDGGPPG. Positions 669–679 are enriched in low complexity; it reads ATGFPGAAGRT. Residues 710–724 are compositionally biased toward gly residues; it reads GPVGRGETGAGGPPG. Composition is skewed to low complexity over residues 725–759 and 767–777; these read FTGE…LGLP and LPGVAGAVGEP. Residues 778 to 788 are compositionally biased toward gly residues; it reads GPLGIGPPGAR. Positions 840–855 are enriched in low complexity; it reads EPGPVGSVGPVGALGP. The segment covering 865-876 has biased composition (basic and acidic residues); the sequence is RGDKGEPGDKGP. Residues 949–961 are compositionally biased toward pro residues; it reads SGPPGPPGPPGPP.

The protein belongs to the fibrillar collagen family. Trimers of one alpha 2(I) and two alpha 1(I) chains. Interacts (via C-terminus) with TMEM131 (via PapD-L domain); the interaction is direct and is involved in assembly and TRAPPIII ER-to-Golgi transport complex-dependent secretion of collagen. Prolines at the third position of the tripeptide repeating unit (G-X-Y) are hydroxylated in some or all of the chains. In terms of tissue distribution, expressed in bones.

It localises to the secreted. The protein resides in the extracellular space. It is found in the extracellular matrix. Its function is as follows. Type I collagen is a member of group I collagen (fibrillar forming collagen). This chain is Collagen alpha-2(I) chain, found in Bradypus variegatus (Brown-throated three-fingered sloth).